Reading from the N-terminus, the 281-residue chain is Putative glutamine amidotransferase-like protein RP404 (281 aa).

The region spanning 19-281 (KYTYADFPWY…KALVKASKYI (263 aa)) is the Glutamine amidotransferase type-1 domain. An RPE1 insert domain is found at 139–174 (RHFSKLTYSKKFECNTEAFATTVYTLPIKLEFENAP).

The polypeptide is Putative glutamine amidotransferase-like protein RP404 (Rickettsia prowazekii (strain Madrid E)).